Consider the following 1214-residue polypeptide: Myosin-1 (1214 aa).

The segment at 1-21 (MAIIKRGARNKTAQEPAKRSA) is disordered. Residues 36-715 (VGVSDLTLLS…TLFALEHMRD (680 aa)) form the Myosin motor domain. 129-136 (GESGAGKT) contributes to the ATP binding site. Ser357 is subject to Phosphoserine. Residues 404–486 (SIGILDIYGF…PGIFAAMNDS (83 aa)) are actin-binding. IQ domains lie at 719–739 (YNMAARIQRAWRRFLQRRIDS) and 740–765 (ATRIQRAIREKKGGNKYEKLRDEGSK). A TH1 domain is found at 771 to 961 (KERRTMSLLG…TILVRRGHPA (191 aa)). Disordered stretches follow at residues 926–1090 (KPGK…SELP), 1129–1177 (HQGG…AAAQ), and 1193–1214 (NKMRVESDGEDNGNDDDDDDDW). A compositionally biased stretch (basic residues) spans 965-980 (QKKKPKKGKGHSKHHS). Low complexity-rich tracts occupy residues 981–1000 (TSTSAPRSSVQSSQPSAPVS) and 1037–1057 (AAQPQATPQPAQVTQPQQKKV). Residues 1058–1067 (APPPPPPPPM) show a composition bias toward pro residues. One can recognise an SH3 domain in the interval 1069–1131 (SSEPKYEAAY…PTNYVVKHQG (63 aa)). The span at 1157 to 1177 (VSSSQSETATTATPASVAAAQ) shows a compositional bias: low complexity. Positions 1200 to 1214 (DGEDNGNDDDDDDDW) are enriched in acidic residues.

It belongs to the TRAFAC class myosin-kinesin ATPase superfamily. Myosin family. Post-translationally, phosphorylation of the TEDS site (Ser-357) is required for the polarization of the actin cytoskeleton. Phosphorylation probably activates the myosin-I ATPase activity.

It is found in the cytoplasm. The protein localises to the cytoskeleton. Its subcellular location is the actin patch. In terms of biological role, type-I myosin implicated in the organization of the actin cytoskeleton. Required for proper actin cytoskeleton polarization. At the cell cortex, assembles in patch-like structures together with proteins from the actin-polymerizing machinery and promotes actin assembly. Functions as actin nucleation-promoting factor (NPF) for the Arp2/3 complex. This Vanderwaltozyma polyspora (strain ATCC 22028 / DSM 70294 / BCRC 21397 / CBS 2163 / NBRC 10782 / NRRL Y-8283 / UCD 57-17) (Kluyveromyces polysporus) protein is Myosin-1 (MYO1).